The following is a 663-amino-acid chain: MSDNPSSRAGPEVVPTPPPSPAAEAAVTALPAHGHRPPATGSALAKLALGALGVVYGDIGTSPLYALKECFTGHHGVQATPANVLGVLSLVFWAMTFVVTFKYLSFVMRADNRGEGGILALLALVGKHEVRRSGKQLLIILGLFGAALLYGDGVITPAISVLGAVEGLSVAAPALEHWVVPVTVGILALLFFIQRRGTAAVGAVFGPVMLVWFLCIAILGVRGILFDATILQAVLPTHAVAFFARNSWHGFLVLGGVVLVITGGEALYADMGHFGKRPIRFAWLLVAMPALMLNYMGQGAILLHDPQAARNPFYLLVPGWALYPMIAVATAAAIVASQALISGAFSLTRQAVQLGYSPRVTIRHTSSTEIGQIYVPEVNALLGAATIALVLGFKSSSNLAAAYGIAVTGTMAITTLLFHRVARDLWRWPRWRAWPLTLLFLLVDLAFFGANIVKVEEGGWFPLAAAAFVFTLLSTWKRGREGLADLMRGAGLPLDVFLEDIARRKPQRVPGTAVFMTGNTGTVPPVLLHHLKHNKVLHERVVLTSIMSEEIPSVRDAERVTVKELGSGFIQVIARYGFMETPDVPAMFASLPHRKLDGPRIELKPMETTYYLGRETLLPTGPSKMARWRKRLFIIMSRNAQTASAFFGLPPNRVVEMGAQLQL.

Positions 1–23 (MSDNPSSRAGPEVVPTPPPSPAA) are disordered. 12 consecutive transmembrane segments (helical) span residues 81-101 (PANVLGVLSLVFWAMTFVVTF), 137-157 (LLIILGLFGAALLYGDGVITP), 173-193 (PALEHWVVPVTVGILALLFFI), 201-221 (VGAVFGPVMLVWFLCIAILGV), 224-244 (ILFDATILQAVLPTHAVAFFA), 248-268 (WHGFLVLGGVVLVITGGEALY), 283-303 (WLLVAMPALMLNYMGQGAILL), 315-335 (LLVPGWALYPMIAVATAAAIV), 373-393 (IYVPEVNALLGAATIALVLGF), 399-419 (LAAAYGIAVTGTMAITTLLFH), 433-453 (AWPLTLLFLLVDLAFFGANIV), and 455-475 (VEEGGWFPLAAAAFVFTLLST).

The protein belongs to the HAK/KUP transporter (TC 2.A.72) family.

It localises to the cell inner membrane. It carries out the reaction K(+)(in) + H(+)(in) = K(+)(out) + H(+)(out). Transport of potassium into the cell. Likely operates as a K(+):H(+) symporter. The sequence is that of Probable potassium transport system protein Kup from Anaeromyxobacter sp. (strain Fw109-5).